We begin with the raw amino-acid sequence, 907 residues long: MITKLLTKVIGSRNDRTLRRLRKIVKEINNYEPTFEALSDEQLKAKTVEFRQRLEQGETLDQLLPEAFATVREASKRVYGMRHFDVQLIGGMVLNAGQIAEMRTGEGKTLTATLPAYLNALAGKGVHIVTVNDYLAKRDAETNRPLFEFLGMTVGINVPNMPHPAKKEAYQADILYGTNNEFGFDYLRDNMAFRNEDRVQRERFFAVVDEVDSILIDEARTPLIISGPAEDSSELYTRINALIPLLQKQDKEDSEEYRGDGHYTVDEKSKQVHLTETGQEFVEELMVKNGLMEEGDTLYSPTNISLLHHVNAALRAHVLFEKNVDYIVNEDGEVVIVDEHTGRTMPGRRWSEGLHQAVEAKEGVKIQNENQTLASITFQNYFRLYEKLSGMTGTADTEAFEFQSIYGLETVVIPTNKPMIRNDMPDVVYRTEAEKFAAIIEDIKARVEKGQPVLVGTVSIEKSELLSNALKKAKIKHNVLNAKFHEKEAEIVAEAGKPGAVTIATNMAGRGTDIVLGGSWQAKVESMANPTQEQIDEIKAEWKLVHDQVLESGGLHIIGTERHESRRIDNQLRGRSGRQGDAGSSRFYLSMEDSLLRIFTSDRMAALIQSGMEEGEAIESKMLSRSIEKAQRKVEGRNFDIRKQLLEYDDVANDQRKVVYELRDELMSVDDISDMIEHNRVDVLQGVIDEYIPPQSLEDMWDLEGLQERLKNDFDIDAPVKQWLEEDDKLYEEALREKVIDTAVEVYKAKEEVVGAQVLRNFEKSVMLQTLDTLWKEHLAAMDHLRQGIHLRGYAQKNPKQEYKRESFELFEGLLETLKSDVVMILSKVRVQQQEEVERMEAQRRAQAEEAARRAQAQHASAQSQLADDSDEGHHQPVVRDERKVGRNEPCPCGSGKKYKQCHGQIN.

Residues Gln-87, 105 to 109, and Asp-513 contribute to the ATP site; that span reads GEGKT. The span at 841-853 shows a compositional bias: basic and acidic residues; sequence EAQRRAQAEEAAR. The interval 841–907 is disordered; sequence EAQRRAQAEE…KYKQCHGQIN (67 aa). Residues 854–865 are compositionally biased toward low complexity; that stretch reads RAQAQHASAQSQ. Basic and acidic residues predominate over residues 872-887; sequence EGHHQPVVRDERKVGR. Zn(2+) is bound by residues Cys-891, Cys-893, Cys-902, and His-903.

Belongs to the SecA family. In terms of assembly, monomer and homodimer. Part of the essential Sec protein translocation apparatus which comprises SecA, SecYEG and auxiliary proteins SecDF-YajC and YidC. It depends on Zn(2+) as a cofactor.

It is found in the cell inner membrane. Its subcellular location is the cytoplasm. The enzyme catalyses ATP + H2O + cellular proteinSide 1 = ADP + phosphate + cellular proteinSide 2.. Functionally, part of the Sec protein translocase complex. Interacts with the SecYEG preprotein conducting channel. Has a central role in coupling the hydrolysis of ATP to the transfer of proteins into and across the cell membrane, serving both as a receptor for the preprotein-SecB complex and as an ATP-driven molecular motor driving the stepwise translocation of polypeptide chains across the membrane. The sequence is that of Protein translocase subunit SecA from Vibrio vulnificus (strain YJ016).